The chain runs to 87 residues: Scorpine-like peptide Tco 41.46-2 (87 aa).

The first 19 residues, 1 to 19, serve as a signal peptide directing secretion; that stretch reads MERKLALLLFLGMVTLASC. A BetaSPN-type CS-alpha/beta domain is found at 53 to 87; that stretch reads QFGCPAYEGYCNNHCQDIERKDGECHGFKCKCAKD. 3 cysteine pairs are disulfide-bonded: Cys-56–Cys-77, Cys-63–Cys-82, and Cys-67–Cys-84.

Belongs to the long chain scorpion toxin family. Class 1 subfamily. As to expression, expressed by the venom gland.

It is found in the secreted. In terms of biological role, may have antibacterial activity. Inhibits voltage-gated potassium channel. Its function is as follows. Does not induce hemolytic activity, lactate dehydrogenase (LDH) release from mast cells, mast cell degranulation, and antimicrobial effects. In vivo, injection into mice causes moderate edema formation, but induces very weak or no change in nociceptive sensibility. It also reduces mice locomotion, suggesting an increase in anxiety, but causes no alteration in rearing (standing on hind limbs). This chain is Scorpine-like peptide Tco 41.46-2, found in Tityus costatus (Brazilian scorpion).